The primary structure comprises 195 residues: Small ribosomal subunit protein eS7 (195 aa).

Phosphothreonine is present on residues threonine 146 and threonine 151. Phosphoserine is present on residues serine 172 and serine 173.

It belongs to the eukaryotic ribosomal protein eS7 family. Component of the small ribosomal subunit (SSU). Mature yeast ribosomes consist of a small (40S) and a large (60S) subunit. The 40S small subunit contains 1 molecule of ribosomal RNA (18S rRNA) and at least 33 different proteins. The large 60S subunit contains 3 rRNA molecules (25S, 5.8S and 5S rRNA) and at least 46 different proteins. Interacts with snoRNA U3. uS11 interacts with MPP10. Component of the ribosomal small subunit (SSU) processome composed of at least 40 protein subunits and snoRNA U3.

It is found in the cytoplasm. The protein resides in the nucleus. The protein localises to the nucleolus. Functionally, component of the ribosome, a large ribonucleoprotein complex responsible for the synthesis of proteins in the cell. The small ribosomal subunit (SSU) binds messenger RNAs (mRNAs) and translates the encoded message by selecting cognate aminoacyl-transfer RNA (tRNA) molecules. The large subunit (LSU) contains the ribosomal catalytic site termed the peptidyl transferase center (PTC), which catalyzes the formation of peptide bonds, thereby polymerizing the amino acids delivered by tRNAs into a polypeptide chain. The nascent polypeptides leave the ribosome through a tunnel in the LSU and interact with protein factors that function in enzymatic processing, targeting, and the membrane insertion of nascent chains at the exit of the ribosomal tunnel. eS7 is involved in nucleolar processing of pre-18S ribosomal RNA and ribosome assembly. The sequence is that of Small ribosomal subunit protein eS7 (rps7) from Schizosaccharomyces pombe (strain 972 / ATCC 24843) (Fission yeast).